Reading from the N-terminus, the 386-residue chain is Rhomboid domain-containing protein 3 (386 aa).

The next 5 membrane-spanning stretches (helical) occupy residues 20–40, 58–78, 92–112, 141–161, and 163–183; these read VLML…LVLA, LGHT…TVGW, ASAL…GLGL, GALP…LLSS, and PPFL…AGAF. In terms of domain architecture, UBA spans 324–362; that stretch reads VSSLRLQQLERMGFPTEQAVVALAATGRVEGAVSLLVGG.

The protein resides in the membrane. This chain is Rhomboid domain-containing protein 3 (RHBDD3), found in Homo sapiens (Human).